Reading from the N-terminus, the 595-residue chain is GPI mannosyltransferase 3 (595 aa).

The next 10 membrane-spanning stretches (helical) occupy residues 58-78 (YAFP…GVAT), 85-105 (LAHA…GVAA), 128-148 (GPRV…VLLV), 185-207 (FFAT…LYHW), 212-232 (GLDV…FACL), 235-255 (PTNV…LVRS), 260-280 (LLLT…CANI), 289-309 (GVLL…LAAF), 319-339 (LLQS…GALL), and 413-433 (VQSL…VLNT).

It belongs to the glycosyltransferase 22 family. PIGB subfamily.

The protein resides in the endoplasmic reticulum membrane. The protein operates within glycolipid biosynthesis; glycosylphosphatidylinositol-anchor biosynthesis. In terms of biological role, mannosyltransferase involved in glycosylphosphatidylinositol-anchor biosynthesis. Transfers the third mannose to Man2-GlcN-acyl-PI during GPI precursor assembly. The protein is GPI mannosyltransferase 3 (GPI10) of Eremothecium gossypii (strain ATCC 10895 / CBS 109.51 / FGSC 9923 / NRRL Y-1056) (Yeast).